The sequence spans 315 residues: Olfactory receptor 8J2 (315 aa).

Residues M1–Q24 lie on the Extracellular side of the membrane. N-linked (GlcNAc...) asparagine glycosylation is present at N5. A helical membrane pass occupies residues I25 to I45. Residues I46–T57 lie on the Cytoplasmic side of the membrane. A helical membrane pass occupies residues P58–A78. Residues P79–C97 are Extracellular-facing. The cysteines at positions 97 and 179 are disulfide-linked. Residues A98–M118 form a helical membrane-spanning segment. Over A119–L143 the chain is Cytoplasmic. The chain crosses the membrane as a helical span at residues L144–F164. The Extracellular segment spans residues S165–T205. A helical transmembrane segment spans residues N206–L226. Over R227 to S239 the chain is Cytoplasmic. Residues T240–L260 form a helical membrane-spanning segment. Topologically, residues Q261 to D271 are extracellular. N265 is a glycosylation site (N-linked (GlcNAc...) asparagine). The helical transmembrane segment at K272–L292 threads the bilayer. Residues R293–M315 lie on the Cytoplasmic side of the membrane.

This sequence belongs to the G-protein coupled receptor 1 family.

The protein localises to the membrane. Odorant receptor. The chain is Olfactory receptor 8J2 (OR8J2) from Homo sapiens (Human).